Reading from the N-terminus, the 502-residue chain is Maturase K (502 aa).

It belongs to the intron maturase 2 family. MatK subfamily.

It localises to the plastid. It is found in the chloroplast. In terms of biological role, usually encoded in the trnK tRNA gene intron. Probably assists in splicing its own and other chloroplast group II introns. In Brassica oleracea (Wild cabbage), this protein is Maturase K.